Consider the following 913-residue polypeptide: MDFNNCGFIDPQAQLAGALAKQDIRQFVAALDSGALADLQDDRHTSIYEKALSTPGCRDFIEACIDHGSQVNYINKKLDKAAISYAADSRDPGNLAALLKYRPGNKVQVDRKYGQLTPLNSLAKNLTDENAPDVYSCMQLLLDYGASPNIVDQGEFTPLHHVLRKSKVKAGKKELIQLFLDHPELDIDSYRNGEVRRLLQAQFPELKLPEERHTGPEIDIQTLQRTLRDGDETLFEQQFAEYLQNLKGGADNQLNAHQEEYFGLLQESIKRGRQRAFDVILSTGMDINSRPGRANEANLVETAVIYGNWQALERLLKEPNLRLTPDSKLLNAVIGRLDEPPYDGSSHQRCFELLINSDRVDINEADSGRLVPLFFAVKYRNTSAMQKLLKNGAYIGSKSAFGTLPIKDMPPEVLEEHFDSCITTNGERPGDQNFEIIIDYKNLMRQERDSGLNQLQDEMAPIAFIAESKEMRHLLQHPLISSFLFLKWHRLSVIFYLNFLIYSLFTASIITYTLLKFHESDQRALTAFFGLLSWLGISYLILRECIQWIMSPVRYFWSITNIMEVALITLSIFTCMESSFDKETQRVLAVFTILLVSMEFCLLVGSLPVLSISTHMLMLREVSNSFLKSFTLYSIFVLTFSLCFYILFGKSVEEDQSKSATPCPPLGKKEGKDEEQGFNTFTKPIEAVIKTIVMLTGEFDAGSIQFTSIYTYLIFLLFVIFMTIVLFNLLNGLAVSDTQVIKAQAELNGAICRTNVLSRYEQVLTGHGRAGFLLGNHLFRSICQRLMNIYPNYLSLRQISVLPNDGNKVLIPMSDPFEMRTLKKASFQQLPLSAAVPQKKLLDPPLRLLPCCCSLLTGKCSQMSGRVVKRALEVIDQKNAAEQRRKQEQINDSRLKLIEYKLEQLIQLVQDRK.

Topologically, residues 1-490 are cytoplasmic; sequence MDFNNCGFID…SSFLFLKWHR (490 aa). 3 ANK repeats span residues 154–189, 260–289, and 368–397; these read GEFT…DIDS, EYFG…DINS, and GRLV…YIGS. Residues 491-511 traverse the membrane as a helical segment; it reads LSVIFYLNFLIYSLFTASIIT. Residues 512 to 523 lie on the Extracellular side of the membrane; sequence YTLLKFHESDQR. Residues 524-544 traverse the membrane as a helical segment; the sequence is ALTAFFGLLSWLGISYLILRE. Topologically, residues 545 to 555 are cytoplasmic; the sequence is CIQWIMSPVRY. Residues 556 to 576 form a helical membrane-spanning segment; that stretch reads FWSITNIMEVALITLSIFTCM. The Extracellular segment spans residues 577 to 586; the sequence is ESSFDKETQR. The helical transmembrane segment at 587–607 threads the bilayer; it reads VLAVFTILLVSMEFCLLVGSL. Residues 608-628 are Cytoplasmic-facing; that stretch reads PVLSISTHMLMLREVSNSFLK. A helical membrane pass occupies residues 629-649; that stretch reads SFTLYSIFVLTFSLCFYILFG. The Extracellular segment spans residues 650-708; that stretch reads KSVEEDQSKSATPCPPLGKKEGKDEEQGFNTFTKPIEAVIKTIVMLTGEFDAGSIQFTS. The tract at residues 656-675 is disordered; that stretch reads QSKSATPCPPLGKKEGKDEE. The chain crosses the membrane as a helical span at residues 709 to 729; the sequence is IYTYLIFLLFVIFMTIVLFNL. Over 730 to 913 the chain is Cytoplasmic; the sequence is LNGLAVSDTQ…QLIQLVQDRK (184 aa).

It belongs to the transient receptor (TC 1.A.4) family. In terms of tissue distribution, present in multidendritic neurons, chordotonal neurons, a subset of cells in the central nervous system and a subset of sensory neurons in the antennal-maxillary complex. Not detected in gonads and dorsal vessels (at protein level). Expressed in peripheral neurons that extend multiple branched dendrites beneath the larval epidermis, similar to vertebrate pain receptors.

Its subcellular location is the membrane. Receptor-activated non-selective cation channel involved in detection of pain sensation due to high temperature. Involved in heat nociception by being activated by noxious temperature of 38 degrees Celsius. This chain is Transient receptor potential cation channel protein painless (pain), found in Drosophila melanogaster (Fruit fly).